The following is a 249-amino-acid chain: Triosephosphate isomerase (249 aa).

Position 11-13 (11-13 (NWK)) interacts with substrate. Histidine 91 (electrophile) is an active-site residue. The active-site Proton acceptor is glutamate 163. Residues glycine 169, serine 208, and 229-230 (GG) contribute to the substrate site.

It belongs to the triosephosphate isomerase family. Homodimer.

It is found in the cytoplasm. It catalyses the reaction D-glyceraldehyde 3-phosphate = dihydroxyacetone phosphate. Its pathway is carbohydrate biosynthesis; gluconeogenesis. The protein operates within carbohydrate degradation; glycolysis; D-glyceraldehyde 3-phosphate from glycerone phosphate: step 1/1. Involved in the gluconeogenesis. Catalyzes stereospecifically the conversion of dihydroxyacetone phosphate (DHAP) to D-glyceraldehyde-3-phosphate (G3P). This is Triosephosphate isomerase from Pseudoalteromonas translucida (strain TAC 125).